The following is a 241-amino-acid chain: Uridylate kinase (241 aa).

9 to 10 (GS) is a binding site for ATP. Residue Gly-44 participates in UMP binding. ATP-binding residues include Gly-45 and Arg-49. UMP-binding positions include Asp-66 and 114–120 (VTPGQTT). Residues Thr-140, Tyr-146, and Asp-149 each contribute to the ATP site. A disordered region spans residues 222 to 241 (TDVIPTGSEEPIYWTGSSDA).

This sequence belongs to the UMP kinase family. In terms of assembly, homohexamer.

It localises to the cytoplasm. It carries out the reaction UMP + ATP = UDP + ADP. Its pathway is pyrimidine metabolism; CTP biosynthesis via de novo pathway; UDP from UMP (UMPK route): step 1/1. Its activity is regulated as follows. Inhibited by UTP. Its function is as follows. Catalyzes the reversible phosphorylation of UMP to UDP. This Halorubrum lacusprofundi (strain ATCC 49239 / DSM 5036 / JCM 8891 / ACAM 34) protein is Uridylate kinase.